Consider the following 97-residue polypeptide: Large ribosomal subunit protein bL27 (97 aa).

Over residues 1-10 the composition is skewed to polar residues; that stretch reads MVKLNLSNLQ. A propeptide spanning residues 1 to 12 is cleaved from the precursor; it reads MVKLNLSNLQHF. Residues 1-38 are disordered; that stretch reads MVKLNLSNLQHFAHKKGGGSTSNGRDSQAKRLGAKAAD.

This sequence belongs to the bacterial ribosomal protein bL27 family. Post-translationally, the N-terminus is cleaved by ribosomal processing cysteine protease Prp.

The chain is Large ribosomal subunit protein bL27 from Streptococcus equi subsp. zooepidemicus (strain H70).